A 564-amino-acid chain; its full sequence is Multidrug resistance protein 1 (564 aa).

The Cytoplasmic segment spans residues 1–115; the sequence is MHYRFLRDSF…NPQNWPTLQK (115 aa). The disordered stretch occupies residues 60–101; the sequence is IDNQGEPNSSQSSSSNNTIVDNNNNNDNDVDGDKIVVTWDGD. Over residues 67-86 the composition is skewed to low complexity; it reads NSSQSSSSNNTIVDNNNNND. Residues 116–136 traverse the membrane as a helical segment; it reads AFFIFQISFLTTSVYMGSAVY. Residues 137-151 are Extracellular-facing; that stretch reads TPGIEELMHDFGIGR. Residues 152–172 traverse the membrane as a helical segment; sequence VVATLPLTLFVIGYGVGPLVF. The Cytoplasmic portion of the chain corresponds to 173–183; sequence SPMSENAIFGR. Residues 184 to 204 traverse the membrane as a helical segment; that stretch reads TSIYIITLFLFVILQIPTALV. The Extracellular portion of the chain corresponds to 205-206; the sequence is NN. The helical transmembrane segment at 207–227 threads the bilayer; sequence IAGLCILRFLGGFFASPCLAT. Residues 228–242 are Cytoplasmic-facing; sequence GGASVADVVKFWNLP. Residues 243–263 traverse the membrane as a helical segment; sequence VGLAAWSLGAVCGPSFGPFFG. At 264 to 273 the chain is on the extracellular side; it reads SILTVKASWR. A helical membrane pass occupies residues 274 to 294; that stretch reads WTFWFMCIISGFSFVMLCFTL. The Cytoplasmic segment spans residues 295–350; that stretch reads PETFGKTLLYRKAKRLRAITGNDRITSEGEVENSKMTSHELIIDTLWRPLEITVME. The chain crosses the membrane as a helical span at residues 351–371; it reads PVVLLINIYIAMVYSILYLFF. Over 372–390 the chain is Extracellular; the sequence is EVFPIYFVGVKHFTLVELG. Residues 391–411 form a helical membrane-spanning segment; that stretch reads TTYMSIVIGIVIAAFIYIPVI. At 412–428 the chain is on the cytoplasmic side; sequence RQKFTKPILRQEQVFPE. A helical membrane pass occupies residues 429-449; it reads VFIPIAIVGGILLTSGLFIFG. Residues 450–455 are Extracellular-facing; that stretch reads WSANRT. Asn453 carries N-linked (GlcNAc...) asparagine glycosylation. A helical transmembrane segment spans residues 456-476; sequence THWVGPLFGAATTASGAFLIF. The Cytoplasmic segment spans residues 477–503; sequence QTLFNFMGASFKPHYIASVFASNDLFR. The helical transmembrane segment at 504–524 threads the bilayer; the sequence is SVIASVFPLFGAPLFDNLATP. Residues 525 to 528 are Extracellular-facing; it reads EYPV. Residues 529–549 traverse the membrane as a helical segment; it reads AWGSSVLGFITLVMIAIPVLF. Over 550-564 the chain is Cytoplasmic; it reads YLNGPKLRARSKYAN.

Belongs to the major facilitator superfamily. CAR1 family.

Its subcellular location is the cell membrane. Functionally, plasma membrane multidrug efflux pump that confers resistance to numerous chemicals including azoles such as fluconazole, voriconazole, and benztriazoles, as well as to benomyl, cycloheximide, methotrexate, 4-nitroquinoline-N-oxide, sulfometuron methyl, cerulenin, and brefeldin A. In Candida albicans (strain SC5314 / ATCC MYA-2876) (Yeast), this protein is Multidrug resistance protein 1.